Consider the following 543-residue polypeptide: Formate--tetrahydrofolate ligase (543 aa).

54 to 61 contacts ATP; the sequence is TPAGEGKT.

It belongs to the formate--tetrahydrofolate ligase family.

It carries out the reaction (6S)-5,6,7,8-tetrahydrofolate + formate + ATP = (6R)-10-formyltetrahydrofolate + ADP + phosphate. The protein operates within one-carbon metabolism; tetrahydrofolate interconversion. The chain is Formate--tetrahydrofolate ligase from Thermus thermophilus (strain ATCC BAA-163 / DSM 7039 / HB27).